Consider the following 84-residue polypeptide: Large ribosomal subunit protein bL31 (84 aa).

Disordered stretches follow at residues 1–41 (MQHD…DSTN) and 63–84 (RRYG…AADE). The segment covering 21–30 (EITTRSTMET) has biased composition (polar residues). The segment covering 68 to 84 (TDDDEGDDEETEDAADE) has biased composition (acidic residues).

Belongs to the bacterial ribosomal protein bL31 family. Type A subfamily. As to quaternary structure, part of the 50S ribosomal subunit.

Its function is as follows. Binds the 23S rRNA. The protein is Large ribosomal subunit protein bL31 of Salinibacter ruber (strain DSM 13855 / M31).